The primary structure comprises 177 residues: SKP1-like protein 15 (177 aa).

The interaction with the F-box domain of F-box proteins stretch occupies residues 108 to 167 (ILAANYLNVEGLLGLTCQTVADYIKDKTPEEVRELFNIENDFTHEEEEEAIRKENAWAFE).

The protein belongs to the SKP1 family. In terms of assembly, part of a SCF (SKP1-cullin-F-box) protein ligase complex. As to expression, expressed at low levels in seedlings and leaves.

It localises to the nucleus. It functions in the pathway protein modification; protein ubiquitination. Functionally, involved in ubiquitination and subsequent proteasomal degradation of target proteins. Together with CUL1, RBX1 and a F-box protein, it forms a SCF E3 ubiquitin ligase complex. The functional specificity of this complex depends on the type of F-box protein. In the SCF complex, it serves as an adapter that links the F-box protein to CUL1. The protein is SKP1-like protein 15 (ASK15) of Arabidopsis thaliana (Mouse-ear cress).